Reading from the N-terminus, the 93-residue chain is Small ribosomal subunit protein uS19 (93 aa).

The protein belongs to the universal ribosomal protein uS19 family.

In terms of biological role, protein S19 forms a complex with S13 that binds strongly to the 16S ribosomal RNA. The polypeptide is Small ribosomal subunit protein uS19 (Wolinella succinogenes (strain ATCC 29543 / DSM 1740 / CCUG 13145 / JCM 31913 / LMG 7466 / NCTC 11488 / FDC 602W) (Vibrio succinogenes)).